Reading from the N-terminus, the 451-residue chain is Portal protein (451 aa).

This sequence belongs to the SPP1-like portal protein family. In terms of assembly, homododecamer.

The protein localises to the virion. Its function is as follows. Forms the portal vertex of the capsid. This portal plays critical roles in head assembly, genome packaging, neck/tail attachment, and genome ejection. The portal protein multimerizes as a single ring-shaped homododecamer arranged around a central channel. Binds to the terminase subunits to form the packaging machine. This Clostridium phage phiCD119 (strain Clostridium difficile/United States/Govind/2006) (Bacteriophage phiCD119) protein is Portal protein.